The sequence spans 58 residues: Large ribosomal subunit protein bL33 (58 aa).

The protein belongs to the bacterial ribosomal protein bL33 family.

The sequence is that of Large ribosomal subunit protein bL33 from Brachyspira hyodysenteriae (strain ATCC 49526 / WA1).